Here is a 595-residue protein sequence, read N- to C-terminus: Threonine dehydratase 2 biosynthetic, chloroplastic (595 aa).

A chloroplast-targeting transit peptide spans 1-51 (MEFLCLAPTRSFSTNPKLTKSIPSDHTSTTSRIFTYQNMRGSTMRPLALPL). Lys-143 carries the N6-(pyridoxal phosphate)lysine modification. ACT-like domains lie at 420-492 (ALLA…NLSH) and 514-585 (IFGE…LDNY).

Belongs to the serine/threonine dehydratase family. As to quaternary structure, homotetramer. Requires pyridoxal 5'-phosphate as cofactor. In terms of processing, proteolytically cleaved by a chymotrypsin-like digestive protease in the midgut of the lepidopteran insects to remove the C-terminal regulatory domain, which allows efficient metabolizing of threonine in the presence of high isoleucine levels in the gut. As to expression, expressed in floral buds, 8-9 mm long flowers 1 to 2 days before anthesis, open flowers and floral organs including sepals, petals, stamens and carpels of 8-9 mm flowers (at protein level). Expressed in very early floral meristems of the anantha. Over 500-fold expression in mature flowers compared to leaves. Expressed in sepals, petals, stamens and carpels of the mature flower. In sepals, mostly expressed in the abaxial mesophyll cells and in petals in parenchymal cells. Not expressed in epidermal or vascular tissues of sepals and petals. In stamens, expressed in parenchymal cells of the connective and lobes, but not expressed in differentiated tissues such as tapetum (TP), stomium (SM), or pollen grains (PG). Not expressed in roots or seeds. High level of expression in immature flower buds, unopened flowers and opened flowers. Not expressed in unstressed leaves, root, stem or petiole.

It localises to the plastid. It is found in the chloroplast. The enzyme catalyses L-threonine = 2-oxobutanoate + NH4(+). It carries out the reaction L-serine = pyruvate + NH4(+). Its pathway is amino-acid biosynthesis; L-isoleucine biosynthesis; 2-oxobutanoate from L-threonine: step 1/1. Its activity is regulated as follows. Threonine dehydratase 2 biosynthetic, chloroplastic: Strongly inhibited by 1 mM isoleucine. Processed threonine dehydratase 2: Not inhibited by isoleucine. Functionally, not required for normal growth and development of the plant. Involved in defense against lepidopteran, but not coleopteran herbivore insects. Acts in the insect gut to degrade threonine, which is an essential and limiting nutrient for the growth of lepidopteran larvae. Active against both L-threonine and L-serine. This Solanum lycopersicum (Tomato) protein is Threonine dehydratase 2 biosynthetic, chloroplastic.